The chain runs to 475 residues: Sulfate adenylyltransferase subunit 1 (475 aa).

The tr-type G domain occupies lysine 25–arginine 239. The segment at glycine 34 to serine 41 is G1. Glycine 34 to serine 41 lines the GTP pocket. Residues glycine 92–aspartate 96 are G2. The segment at aspartate 113–glycine 116 is G3. GTP-binding positions include aspartate 113–histidine 117 and asparagine 168–aspartate 171. Residues asparagine 168–aspartate 171 form a G4 region. The tract at residues serine 206–leucine 208 is G5.

It belongs to the TRAFAC class translation factor GTPase superfamily. Classic translation factor GTPase family. CysN/NodQ subfamily. Heterodimer composed of CysD, the smaller subunit, and CysN.

It catalyses the reaction sulfate + ATP + H(+) = adenosine 5'-phosphosulfate + diphosphate. Its pathway is sulfur metabolism; hydrogen sulfide biosynthesis; sulfite from sulfate: step 1/3. Its function is as follows. With CysD forms the ATP sulfurylase (ATPS) that catalyzes the adenylation of sulfate producing adenosine 5'-phosphosulfate (APS) and diphosphate, the first enzymatic step in sulfur assimilation pathway. APS synthesis involves the formation of a high-energy phosphoric-sulfuric acid anhydride bond driven by GTP hydrolysis by CysN coupled to ATP hydrolysis by CysD. The chain is Sulfate adenylyltransferase subunit 1 from Escherichia coli (strain ATCC 8739 / DSM 1576 / NBRC 3972 / NCIMB 8545 / WDCM 00012 / Crooks).